A 292-amino-acid chain; its full sequence is 4-diphosphocytidyl-2-C-methyl-D-erythritol kinase (292 aa).

Lysine 11 is an active-site residue. 95 to 105 (PVSAGLAGGSS) provides a ligand contact to ATP. Aspartate 137 is a catalytic residue.

Belongs to the GHMP kinase family. IspE subfamily.

The enzyme catalyses 4-CDP-2-C-methyl-D-erythritol + ATP = 4-CDP-2-C-methyl-D-erythritol 2-phosphate + ADP + H(+). It participates in isoprenoid biosynthesis; isopentenyl diphosphate biosynthesis via DXP pathway; isopentenyl diphosphate from 1-deoxy-D-xylulose 5-phosphate: step 3/6. Its function is as follows. Catalyzes the phosphorylation of the position 2 hydroxy group of 4-diphosphocytidyl-2C-methyl-D-erythritol. This chain is 4-diphosphocytidyl-2-C-methyl-D-erythritol kinase, found in Alkaliphilus oremlandii (strain OhILAs) (Clostridium oremlandii (strain OhILAs)).